The following is a 351-amino-acid chain: ADP-glucose phosphorylase (351 aa).

Residues 1-63 (MTSPSHASDR…QNPNPKPSSC (63 aa)) form a disordered region. Position 41–44 (41–44 (RAKR)) interacts with ADP-alpha-D-glucose. Positions 63 and 66 each coordinate Zn(2+). ADP-alpha-D-glucose is bound by residues 72–74 (ECA) and asparagine 94. Histidine 133 is a Zn(2+) binding site. Residues asparagine 173 and 179 to 182 (GASM) each bind ADP-alpha-D-glucose. Histidine 184 contributes to the Zn(2+) binding site. The Tele-AMP-histidine intermediate role is filled by histidine 186. Glutamine 188 contacts ADP-alpha-D-glucose. Zn(2+)-binding residues include cysteine 216, cysteine 219, histidine 255, and histidine 310. ADP-alpha-D-glucose is bound by residues glycine 321 and 325–326 (FE).

This sequence belongs to the galactose-1-phosphate uridylyltransferase type 1 family. As to quaternary structure, homodimer. Zn(2+) serves as cofactor.

It catalyses the reaction alpha-D-glucose 1-phosphate + ADP + H(+) = ADP-alpha-D-glucose + phosphate. In terms of biological role, catalyzes the conversion of ADP-glucose and inorganic phosphate (Pi) into glucose-1-phosphate and ADP. Does not possess galactose-1-phosphate uridylyltransferase activity. The chain is ADP-glucose phosphorylase from Arabidopsis thaliana (Mouse-ear cress).